Consider the following 343-residue polypeptide: tRNA N6-adenosine threonylcarbamoyltransferase (343 aa).

Fe cation is bound by residues His-111 and His-115. Substrate contacts are provided by residues 134–138, Asp-167, Gly-180, and Asn-276; that span reads LVSGG. Asp-304 is a Fe cation binding site.

It belongs to the KAE1 / TsaD family. Requires Fe(2+) as cofactor.

It localises to the cytoplasm. The catalysed reaction is L-threonylcarbamoyladenylate + adenosine(37) in tRNA = N(6)-L-threonylcarbamoyladenosine(37) in tRNA + AMP + H(+). Required for the formation of a threonylcarbamoyl group on adenosine at position 37 (t(6)A37) in tRNAs that read codons beginning with adenine. Is involved in the transfer of the threonylcarbamoyl moiety of threonylcarbamoyl-AMP (TC-AMP) to the N6 group of A37, together with TsaE and TsaB. TsaD likely plays a direct catalytic role in this reaction. This chain is tRNA N6-adenosine threonylcarbamoyltransferase, found in Hahella chejuensis (strain KCTC 2396).